Here is a 379-residue protein sequence, read N- to C-terminus: Tetraacyldisaccharide 4'-kinase (379 aa).

63-70 (AVGGAGKT) is an ATP binding site.

Belongs to the LpxK family.

It carries out the reaction a lipid A disaccharide + ATP = a lipid IVA + ADP + H(+). Its pathway is glycolipid biosynthesis; lipid IV(A) biosynthesis; lipid IV(A) from (3R)-3-hydroxytetradecanoyl-[acyl-carrier-protein] and UDP-N-acetyl-alpha-D-glucosamine: step 6/6. Transfers the gamma-phosphate of ATP to the 4'-position of a tetraacyldisaccharide 1-phosphate intermediate (termed DS-1-P) to form tetraacyldisaccharide 1,4'-bis-phosphate (lipid IVA). The chain is Tetraacyldisaccharide 4'-kinase from Anaeromyxobacter dehalogenans (strain 2CP-1 / ATCC BAA-258).